Here is a 161-residue protein sequence, read N- to C-terminus: Allophycocyanin beta chain (161 aa).

An N4-methylasparagine modification is found at Asn-71. Cys-81 contributes to the (2R,3E)-phycocyanobilin binding site.

The protein belongs to the phycobiliprotein family. In terms of assembly, heterodimer of an alpha and a beta chain. Contains one covalently linked phycocyanobilin chromophore.

It localises to the plastid. The protein localises to the chloroplast thylakoid membrane. Functionally, light-harvesting photosynthetic bile pigment-protein from the phycobiliprotein complex. Allophycocyanin has a maximum absorption at approximately 650 nanometers. This is Allophycocyanin beta chain (apcB) from Porphyra purpurea (Red seaweed).